A 481-amino-acid polypeptide reads, in one-letter code: ATP synthase subunit beta (481 aa).

An ATP-binding site is contributed by 167–174 (GGAGVGKT).

Belongs to the ATPase alpha/beta chains family. As to quaternary structure, F-type ATPases have 2 components, CF(1) - the catalytic core - and CF(0) - the membrane proton channel. CF(1) has five subunits: alpha(3), beta(3), gamma(1), delta(1), epsilon(1). CF(0) has three main subunits: a(1), b(2) and c(9-12). The alpha and beta chains form an alternating ring which encloses part of the gamma chain. CF(1) is attached to CF(0) by a central stalk formed by the gamma and epsilon chains, while a peripheral stalk is formed by the delta and b chains.

The protein localises to the cell membrane. The enzyme catalyses ATP + H2O + 4 H(+)(in) = ADP + phosphate + 5 H(+)(out). In terms of biological role, produces ATP from ADP in the presence of a proton gradient across the membrane. The catalytic sites are hosted primarily by the beta subunits. This chain is ATP synthase subunit beta, found in Corynebacterium diphtheriae (strain ATCC 700971 / NCTC 13129 / Biotype gravis).